The chain runs to 265 residues: MEDINFSSLAPRHGTRPYMGTWNEIGTSQLNGGAFNWNSIWSGLKNFGSTIKTYGTKAWNSQTGQMLRDKLKDQNFQQKVVDGLASGINGVVDIANQAVQKKIANRLEPRPDEVMVEEKLPPLETVPGSVPTKGEKRPRPDAEETLVTHTTEPPSYEEAIKQGAALSPTTYPMTKPILPMATRVYGKNENVPMTLELPPLPEPTIADPVGSVPVASVPVASTVSRPAVRPVAVASLRNPRSSNWQSTLNSIVGLGVKSLKRRRCY.

A propeptide spanning residues 1-33 is cleaved from the precursor; sequence MEDINFSSLAPRHGTRPYMGTWNEIGTSQLNGG. The tract at residues 34 to 54 is amphipathic alpha-helix essential for membrane lytic activity; sequence AFNWNSIWSGLKNFGSTIKTY. The segment at 36-53 is involved in endosomal membrane lysis; the sequence is NWNSIWSGLKNFGSTIKT. Residues 48–74 are interaction with hexon protein; it reads GSTIKTYGTKAWNSQTGQMLRDKLKDQ. The short motif at 67 to 76 is the Nuclear export signal element; that stretch reads LRDKLKDQNF. The tract at residues 123–155 is disordered; that stretch reads LETVPGSVPTKGEKRPRPDAEETLVTHTTEPPS. The segment covering 133–142 has biased composition (basic and acidic residues); it reads KGEKRPRPDA. The short motif at 136 to 140 is the Nuclear localization signal element; the sequence is KRPRP. Position 148 is a phosphothreonine; by host (Thr148). The short motif at 153–156 is the PPXY motif element; that stretch reads PPSY. The Nuclear export signal signature appears at 246 to 257; it reads STLNSIVGLGVK. The segment at 248–254 is interaction with hexon protein; that stretch reads LNSIVGL. A binds to importin alpha/beta, involved in hexon nuclear import region spans residues 255–265; sequence GVKSLKRRRCY. Positions 260–263 match the Nuclear localization signal motif; sequence KRRR.

It belongs to the adenoviridae protein VI family. In terms of assembly, interacts with hexon protein; this interaction allows nuclear import of hexon trimers and possibly pre-capsid assembly. Interacts (via C-terminal NLS) with importin alpha/beta. Interacts (via PPxY motif) with host NEDD4 ubiquitine ligase; this interaction might play a role in virus intracellular transport during entry. Part of a complex composed of the core-capsid bridging protein, the endosome lysis protein VI and the hexon-linking protein VIII; these interactions bridge the virus core to the capsid. Interacts with peripentonal hexons; this interaction stabilizes the capsid by gluing two peripentonal hexons together and joining them with an adjacent group-of-nine hexon. As to quaternary structure, heterodimer with the viral protease; disulfide-linked. Interacts with the viral protease. Ubiquitinated by Nedd4 following partial capsid disassembly; which might play a role in intracellular virus movement during entry. Post-translationally, contains the major nuclear import and export signals. Proteolytically removed during virion maturation. The processing of the C-terminus turns the precursor into a mature viral structural protein and abrogates its ability to promote hexon import and act as a potential chaperone protein.

The protein localises to the host nucleus. It localises to the host cytoplasm. It is found in the virion. Its function is as follows. During virus assembly, promotes hexon trimers nuclear import through nuclear pore complexes via an importin alpha/beta-dependent mechanism. By analogy to herpesviruses capsid assembly, might act as a chaperone to promote the formation of the icosahedral capsid. In terms of biological role, structural component of the virion that provides increased stability to the particle shell through its interaction with the core-capsid bridging protein and the hexon-linking protein VIII. Fibers shedding during virus entry into host cell allows the endosome lysis protein to be exposed as a membrane-lytic peptide. Exhibits pH-independent membrane fragmentation activity and probably mediates viral rapid escape from host endosome via organellar membrane lysis. It is not clear if it then remains partially associated with the capsid and involved in the intracellular microtubule-dependent transport of capsid to the nucleus, or if it is lost during endosomal penetration. Cofactor that activates the viral protease. Binds to viral protease in a 1:1 ratio. The polypeptide is Pre-protein VI (Human adenovirus A serotype 12 (HAdV-12)).